The primary structure comprises 202 residues: ATP-dependent dethiobiotin synthetase BioD (202 aa).

12–17 (GIGKTI) is an ATP binding site. Residue T16 coordinates Mg(2+). K32 is a catalytic residue. Residue S36 coordinates substrate. Residues D43, 94–97 (EGAG), and 178–180 (PVV) contribute to the ATP site. 2 residues coordinate Mg(2+): D43 and E94.

It belongs to the dethiobiotin synthetase family. Homodimer. Requires Mg(2+) as cofactor.

It is found in the cytoplasm. The catalysed reaction is (7R,8S)-7,8-diammoniononanoate + CO2 + ATP = (4R,5S)-dethiobiotin + ADP + phosphate + 3 H(+). It participates in cofactor biosynthesis; biotin biosynthesis; biotin from 7,8-diaminononanoate: step 1/2. Its function is as follows. Catalyzes a mechanistically unusual reaction, the ATP-dependent insertion of CO2 between the N7 and N8 nitrogen atoms of 7,8-diaminopelargonic acid (DAPA, also called 7,8-diammoniononanoate) to form a ureido ring. The polypeptide is ATP-dependent dethiobiotin synthetase BioD (Sphingopyxis alaskensis (strain DSM 13593 / LMG 18877 / RB2256) (Sphingomonas alaskensis)).